The primary structure comprises 876 residues: Exosome complex component 10 homolog (876 aa).

Residues 1–22 are disordered; sequence MSGEESMPDEEQKQSEEEEEMI. One can recognise a 3'-5' exonuclease domain in the interval 279–445; that stretch reads TMIDTKEKLE…YSYDMLREQL (167 aa). Positions 303, 305, 361, and 430 each coordinate Mg(2+). Residues 489 to 569 enclose the HRDC domain; the sequence is NTRQDYALTH…VEARDVKLEK (81 aa). 3 stretches are compositionally biased toward basic and acidic residues: residues 690–730, 741–752, and 834–847; these read EKQE…EFDA, VPDDPNKPKDPE, and KPVR…DPFH. The segment at 690-876 is disordered; sequence EKQEEEERKE…NRQGTINYKK (187 aa). Positions 848 to 861 are enriched in basic residues; that stretch reads QKYRLKNKTKKNMA.

The protein belongs to the exosome component 10/RRP6 family. As to quaternary structure, component of the RNA exosome complex. Interacts with crn-5. Mg(2+) serves as cofactor. Ubiquitously expressed.

The protein resides in the nucleus. It is found in the nucleolus. Its subcellular location is the nucleoplasm. In terms of biological role, catalytic component of the RNA exosome complex which has 3'-&gt;5' exoribonuclease activity and participates in a multitude of cellular RNA processing and degradation events. Involved in apoptotic DNA degradation. Involved in regulation of antisense ribosomal siRNA production. Involved in response to cold-warm shock. This chain is Exosome complex component 10 homolog, found in Caenorhabditis elegans.